The primary structure comprises 554 residues: Bifunctional epoxide hydrolase 2 (554 aa).

A phosphatase region spans residues M1 to A224. Mg(2+)-binding residues include D9 and D11. Position 55 is an N6-succinyllysine (K55). T123–N124 is a phosphate binding site. An N6-acetyllysine; alternate modification is found at K176. K176 is subject to N6-succinyllysine; alternate. A Mg(2+)-binding site is contributed by D185. Residues K191 and K215 each carry the N6-acetyllysine modification. The tract at residues N233 to I554 is epoxide hydrolase. The AB hydrolase-1 domain occupies P257–P530. The Nucleophile role is filled by D333. S368 is modified (phosphoserine). N6-succinyllysine is present on K371. Residue Y381 coordinates substrate. N6-succinyllysine occurs at positions 420 and 454. Y465 (proton donor) is an active-site residue. K504 bears the N6-succinyllysine mark. K508 carries the N6-acetyllysine; alternate modification. Residue K508 is modified to N6-succinyllysine; alternate. C521 carries the S-(15-deoxy-Delta12,14-prostaglandin J2-9-yl)cysteine lipid modification. Catalysis depends on H523, which acts as the Proton acceptor. Residues S552 to I554 carry the Microbody targeting signal motif. N6-succinyllysine is present on K553.

This sequence belongs to the AB hydrolase superfamily. Epoxide hydrolase family. As to quaternary structure, homodimer. It depends on Mg(2+) as a cofactor. In terms of processing, the N-terminus is blocked. The covalent modification of cysteine by 15-deoxy-Delta12,14-prostaglandin-J2 is autocatalytic and reversible. It may occur as an alternative to other cysteine modifications, such as S-nitrosylation and S-palmitoylation. Detected in liver, intestine, ovary and kidney. Detected at low levels in heart and muscle.

The protein localises to the cytoplasm. The protein resides in the peroxisome. It catalyses the reaction an epoxide + H2O = an ethanediol. The enzyme catalyses (9S,10S)-10-hydroxy-9-(phosphooxy)octadecanoate + H2O = (9S,10S)-9,10-dihydroxyoctadecanoate + phosphate. It carries out the reaction 8-hydroxy-(11S,12S)-epoxy-(5Z,9E,14Z)-eicosatrienoate + H2O = (8,11R,12S)-trihydroxy-(5Z,9E,14Z)-eicosatrienoate. The catalysed reaction is 10-hydroxy-(11S,12S)-epoxy- (5Z,8Z,14Z)-eicosatrienoate + H2O = (10,11S,12R)-trihydroxy-(5Z,8Z,14Z)-eicosatrienoate. It catalyses the reaction (8S,9R)-epoxy-(5Z,11Z,14Z)-eicosatrienoate + H2O = (8S,9S)-dihydroxy-(5Z,11Z,14Z)-eicosatrienoate. The enzyme catalyses (11S,12R)-epoxy-(5Z,8Z,14Z)-eicosatrienoate + H2O = (11R,12R)-dihydroxy-(5Z,8Z,14Z)-eicosatrienoate. It carries out the reaction (11S,12R)-epoxy-(5Z,8Z,14Z)-eicosatrienoate + H2O = (11S,12S)-dihydroxy-(5Z,8Z,14Z)-eicosatrienoate. The catalysed reaction is (14S,15R)-epoxy-(5Z,8Z,11Z)-eicosatrienoate + H2O = (14R,15R)-dihydroxy-(5Z,8Z,11Z)-eicosatrienoate. It catalyses the reaction (14S,15R)-epoxy-(5Z,8Z,11Z)-eicosatrienoate + H2O = (14S,15S)-dihydroxy-(5Z,8Z,11Z)-eicosatrienoate. The enzyme catalyses (11R,12S)-epoxy-(5Z,8Z,14Z)-eicosatrienoate + H2O = (11S,12S)-dihydroxy-(5Z,8Z,14Z)-eicosatrienoate. It carries out the reaction (11R,12S)-epoxy-(5Z,8Z,14Z)-eicosatrienoate + H2O = (11R,12R)-dihydroxy-(5Z,8Z,14Z)-eicosatrienoate. The catalysed reaction is (8S,9R)-epoxy-(5Z,11Z,14Z)-eicosatrienoate + H2O = (8R,9R)-dihydroxy-(5Z,11Z,14Z)-eicosatrienoate. It catalyses the reaction 12-phosphooxy-(9Z)-octadecenoate + H2O = 12-hydroxy-(9Z)-octadecenoate + phosphate. The enzyme catalyses 12-phosphooxy-(9E)-octadecenoate + H2O = 12-hydroxy-(9E)-octadecenoate + phosphate. It carries out the reaction 12-(phosphooxy)octadecanoate + H2O = 12-hydroxyoctadecanoate + phosphate. The catalysed reaction is 8,9-epoxy-(5Z,11Z,14Z)-eicosatrienoate + H2O = 8,9-dihydroxy-(5Z,11Z,14Z)-eicosatrienoate. It catalyses the reaction 11,12-epoxy-(5Z,8Z,14Z)-eicosatrienoate + H2O = 11,12-dihydroxy-(5Z,8Z,14Z)-eicosatrienoate. The enzyme catalyses 14,15-epoxy-(5Z,8Z,11Z)-eicosatrienoate + H2O = 14,15-dihydroxy-(5Z,8Z,11Z)-eicosatrienoate. It carries out the reaction 9,10-epoxy-(12Z)-octadecenoate + H2O = 9,10-dihydroxy-(12Z)-octadecenoate. The catalysed reaction is 1-tetradecanoyl-sn-glycerol 3-phosphate + H2O = 1-tetradecanoyl-sn-glycerol + phosphate. It catalyses the reaction 1-octadecanoyl-sn-glycero-3-phosphate + H2O = 1-octadecanoyl-sn-glycerol + phosphate. The enzyme catalyses 1-(5Z,8Z,11Z,14Z-eicosatetraenoyl)-sn-glycero-3-phosphate + H2O = 1-(5Z,8Z,11Z,14Z-eicosatetraenoyl)-sn-glycerol + phosphate. It carries out the reaction 1-hexadecanoyl-sn-glycero-3-phosphate + H2O = 1-hexadecanoyl-sn-glycerol + phosphate. The catalysed reaction is 1-(9Z-octadecenoyl)-sn-glycero-3-phosphate + H2O = 1-(9Z-octadecenoyl)-sn-glycerol + phosphate. It catalyses the reaction (14R,15S)-epoxy-(5Z,8Z,11Z)-eicosatrienoate + H2O = (14R,15R)-dihydroxy-(5Z,8Z,11Z)-eicosatrienoate. With respect to regulation, inhibited by 1-(1-acetylpiperidin-4-yl)-3-(4-(trifl uoromethoxy)phenyl)urea (TPAU), 1-cyclohexyl-3-dodecylurea (CDU), 12-(3-adamantan-1-yl-ureido)-dodecanoic acid (AUDA), 1-((3S, 5S, 7S)-adamantan-1-yl)-3-(5-(2-(2-ethoxyethoxy) ethoxy)pentyl)urea (AEPU), N-adamantyl-N[']-cyclohexyl urea (ACU), 4-(((1S, 4S)-4-(3-((3S, 5S, 7S)-adamantan-1-yl) ureido)cyclohexyl)oxy)benzoic acid (c-AUCB), 4-(((1R, 4R)-4-(3-((3S, 5S, 7S)-adamantan-1-yl)ureido)cyclohexyl)oxy)benzoic acid (t-AUCB), 4-(((1R, 4R)-4-(3-(4(trifluoromethoxy)phenyl)ureido)cyclohexyl)oxy)benzoic acid (t-TAUCB) and to a lesser extent by 8-(3-((3S, 5S, 7S)-adamantan-1-yl)ureido) octanoic acid (AUOA). Phosphatase activity is inhibited by dodecyl-phosphate, phospholipids such as phospho-lysophosphatidic acids and fatty acids such as palmitic acid and lauric acid. In terms of biological role, bifunctional enzyme. The C-terminal domain has epoxide hydrolase activity and acts on epoxides (alkene oxides, oxiranes) and arene oxides. Plays a role in xenobiotic metabolism by degrading potentially toxic epoxides. Also determines steady-state levels of physiological mediators. Its function is as follows. Bifunctional enzyme. The N-terminal domain has lipid phosphatase activity, with the highest activity towards threo-9,10-phosphonooxy-hydroxy-octadecanoic acid, followed by erythro-9,10-phosphonooxy-hydroxy-octadecanoic acid, 12-phosphonooxy-octadec-9Z-enoic acid and 12-phosphonooxy-octadec-9E-enoic acid. Has phosphatase activity toward lyso-glycerophospholipids with also some lower activity toward lysolipids of sphingolipid and isoprenoid phosphates. This Mus musculus (Mouse) protein is Bifunctional epoxide hydrolase 2.